A 114-amino-acid polypeptide reads, in one-letter code: FK506-binding protein 1 (114 aa).

N-acetylserine is present on serine 2. One can recognise a PPIase FKBP-type domain in the interval 26–114 (GDLVTIHYTG…VFDVELLKVN (89 aa)). Serine 51 bears the Phosphoserine mark.

It belongs to the FKBP-type PPIase family. FKBP1 subfamily. In terms of assembly, interacts with HOM3; the interaction is direct, plays a role in feedback inhibition of aspartokinase by threonine, and is inhibited by tacrolimus and sirolimus. Interacts with HMO1. Interacts with FAP1.

The protein resides in the cytoplasm. The protein localises to the mitochondrion. It carries out the reaction [protein]-peptidylproline (omega=180) = [protein]-peptidylproline (omega=0). Its function is as follows. PPIases accelerate the folding of proteins. It catalyzes the cis-trans isomerization of proline imidic peptide bonds in oligopeptides. Plays a role in feedback inhibition of the pathway synthesizing the aspartate family of amino acids by binding to aspartokinase. This is FK506-binding protein 1 (FPR1) from Saccharomyces cerevisiae (strain ATCC 204508 / S288c) (Baker's yeast).